Consider the following 257-residue polypeptide: Phosphonates import ATP-binding protein PhnC (257 aa).

Positions 4 to 248 (IKFKNVSKVY…VFSKIYGRTI (245 aa)) constitute an ABC transporter domain. 37 to 44 (GLSGAGKS) contributes to the ATP binding site.

The protein belongs to the ABC transporter superfamily. Phosphonates importer (TC 3.A.1.9.1) family. The complex is composed of two ATP-binding proteins (PhnC), two transmembrane proteins (PhnE) and a solute-binding protein (PhnD).

Its subcellular location is the cell membrane. It carries out the reaction phosphonate(out) + ATP + H2O = phosphonate(in) + ADP + phosphate + H(+). Functionally, part of the ABC transporter complex PhnCDE involved in phosphonates import. Responsible for energy coupling to the transport system. This chain is Phosphonates import ATP-binding protein PhnC, found in Staphylococcus aureus (strain MRSA252).